The following is a 126-amino-acid chain: Thioredoxin-like 3-3 (126 aa).

Residues 1 to 24 form a disordered region; it reads MRKQESEGANLEFESKSNDNGNVK. In terms of domain architecture, Thioredoxin spans 5 to 126; the sequence is ESEGANLEFE…RLHDRLWLHS (122 aa). Active-site nucleophile residues include C55 and C58. Cysteines 55 and 58 form a disulfide.

The protein belongs to the thioredoxin family.

Functionally, probable thiol-disulfide oxidoreductase that may participate in various redox reactions. The chain is Thioredoxin-like 3-3 from Arabidopsis thaliana (Mouse-ear cress).